The chain runs to 198 residues: HTH-type transcriptional regulator BetI (198 aa).

Residues 8–68 form the HTH tetR-type domain; the sequence is PLRRRELIDA…ATMRHLLREL (61 aa). Residues 31 to 50 constitute a DNA-binding region (H-T-H motif); it reads TVAQIAHEAGVSPALAHHYF.

Its pathway is amine and polyamine biosynthesis; betaine biosynthesis via choline pathway [regulation]. In terms of biological role, repressor involved in the biosynthesis of the osmoprotectant glycine betaine. It represses transcription of the choline transporter BetT and the genes of BetAB involved in the synthesis of glycine betaine. The sequence is that of HTH-type transcriptional regulator BetI from Brucella abortus (strain 2308).